A 90-amino-acid polypeptide reads, in one-letter code: Electron transfer flavoprotein regulatory factor 1 (90 aa).

It belongs to the complex I LYR family. In terms of assembly, homotetramer. Interacts with NDUFAB1. Interacts with ETFA. Interacts with ETFB.

Its subcellular location is the mitochondrion. Its function is as follows. Acts as a regulator of the electron transfer flavoprotein by promoting the removal of flavin from the ETF holoenzyme (composed of ETFA and ETFB). The protein is Electron transfer flavoprotein regulatory factor 1 of Homo sapiens (Human).